The sequence spans 398 residues: Phosphoglycerate kinase (398 aa).

Substrate contacts are provided by residues 21-23 (DFN), arginine 36, 59-62 (HLGR), arginine 119, and arginine 157. ATP-binding positions include lysine 208, glycine 296, glutamate 327, and 354 to 357 (GGDS).

Belongs to the phosphoglycerate kinase family. Monomer.

Its subcellular location is the cytoplasm. It carries out the reaction (2R)-3-phosphoglycerate + ATP = (2R)-3-phospho-glyceroyl phosphate + ADP. It functions in the pathway carbohydrate degradation; glycolysis; pyruvate from D-glyceraldehyde 3-phosphate: step 2/5. This chain is Phosphoglycerate kinase, found in Streptococcus pneumoniae (strain 70585).